Consider the following 222-residue polypeptide: UPF0758 protein YicR (222 aa).

An MPN domain is found at 100-222; the sequence is PLLSPEMTRE…YVSFAERGWI (123 aa). Zn(2+) contacts are provided by histidine 171, histidine 173, and aspartate 184. Residues 171-184 carry the JAMM motif motif; it reads HNHPSGCAEPSKAD.

Belongs to the UPF0758 family. YicR subfamily.

The chain is UPF0758 protein YicR from Escherichia coli O9:H4 (strain HS).